Consider the following 263-residue polypeptide: Urease accessory protein UreH (263 aa).

Belongs to the UreD family. UreH, UreF and UreG form a complex that acts as a GTP-hydrolysis-dependent molecular chaperone, activating the urease apoprotein by helping to assemble the nickel containing metallocenter of UreC. The UreE protein probably delivers the nickel.

Its subcellular location is the cytoplasm. In terms of biological role, required for maturation of urease via the functional incorporation of the urease nickel metallocenter. The chain is Urease accessory protein UreH from Helicobacter acinonychis (strain Sheeba).